The primary structure comprises 177 residues: Large ribosomal subunit protein uL6 (177 aa).

The protein belongs to the universal ribosomal protein uL6 family. In terms of assembly, part of the 50S ribosomal subunit.

This protein binds to the 23S rRNA, and is important in its secondary structure. It is located near the subunit interface in the base of the L7/L12 stalk, and near the tRNA binding site of the peptidyltransferase center. The sequence is that of Large ribosomal subunit protein uL6 from Haemophilus ducreyi (strain 35000HP / ATCC 700724).